A 113-amino-acid chain; its full sequence is MAKNKFPGLGGGFNINQLQKQARKMQEEIEKLQEELNQREIEVSSGGGAVKVVINGKKEIKSIQILPEVVDPEDVETLQDLIVACVNEAIRKVDKMVEEEMQKVTGFGIPGLF.

This sequence belongs to the YbaB/EbfC family. Homodimer.

It is found in the cytoplasm. It localises to the nucleoid. In terms of biological role, binds to DNA and alters its conformation. May be involved in regulation of gene expression, nucleoid organization and DNA protection. The sequence is that of Nucleoid-associated protein Athe_1143 from Caldicellulosiruptor bescii (strain ATCC BAA-1888 / DSM 6725 / KCTC 15123 / Z-1320) (Anaerocellum thermophilum).